The chain runs to 800 residues: Structural protein ORF800 (800 aa).

4 coiled-coil regions span residues 98–130 (AENIVEYLKEEEKVKELLNKLNDALSQADYNLA), 447–475 (LLAEANNLIDQANAVITQVNNMMNNANNL), 514–567 (AINQ…ANNL), and 606–633 (AINQDSVNQVEENIQNIQNTITEFNLLA). A disordered region spans residues 759 to 800 (AESIAESESETTESENNETTESTANSEGEKQEGEHGARLIRV). Residues 761–776 (SIAESESETTESENNE) are compositionally biased toward acidic residues. Residues 785–800 (EGEKQEGEHGARLIRV) show a composition bias toward basic and acidic residues.

It is found in the virion. This chain is Structural protein ORF800, found in Acidianus convivator (ATV).